Reading from the N-terminus, the 440-residue chain is Murein DD-endopeptidase MepM (440 aa).

Residues valine 21–valine 40 traverse the membrane as a helical segment. Residues histidine 96–tryptophan 141 form the LysM domain. Histidine 314 is a binding site for Zn(2+).

The protein belongs to the peptidase M23B family. Zn(2+) serves as cofactor.

Its subcellular location is the cell membrane. It functions in the pathway cell wall biogenesis; cell wall polysaccharide biosynthesis. In terms of biological role, a murein DD-endopeptidase with specificity for D-Ala-meso-diaminopimelic acid (mDAP) cross-links. Its role is probably to cleave D-Ala-mDAP cross-links to allow insertion of new glycans and thus cell wall expansion. Functionally redundant with MepM and MepH. The polypeptide is Murein DD-endopeptidase MepM (mepM) (Escherichia coli O6:H1 (strain CFT073 / ATCC 700928 / UPEC)).